The sequence spans 328 residues: CMP-N-acetylneuraminate-beta-galactosamide-alpha-2,3-sialyltransferase 4 (328 aa).

Topologically, residues 1 to 7 (MCPAGWK) are cytoplasmic. Residues 8–25 (LLAMLALVLVVMVWYSIS) traverse the membrane as a helical; Signal-anchor for type II membrane protein segment. At 26–328 (REDSFYFPIP…MGAVKNLTSF (303 aa)) the chain is on the lumenal side. Asn-56, Asn-126, Asn-305, and Asn-324 each carry an N-linked (GlcNAc...) asparagine glycan. A disulfide bridge links Cys-115 with Cys-268.

It belongs to the glycosyltransferase 29 family. The soluble form derives from the membrane form by proteolytic processing.

Its subcellular location is the golgi apparatus. It localises to the golgi stack membrane. The protein localises to the secreted. The enzyme catalyses a beta-D-galactosyl-(1-&gt;3)-N-acetyl-beta-D-galactosaminyl derivative + CMP-N-acetyl-beta-neuraminate = an N-acetyl-alpha-neuraminyl-(2-&gt;3)-beta-D-galactosyl-(1-&gt;3)-N-acetyl-beta-D-galactosaminyl derivative + CMP + H(+). It carries out the reaction a beta-D-galactosyl-(1-&gt;3)-N-acetyl-alpha-D-galactosaminyl derivative + CMP-N-acetyl-beta-neuraminate = an N-acetyl-alpha-neuraminyl-(2-&gt;3)-beta-D-galactosyl-(1-&gt;3)-N-acetyl-alpha-D-galactosaminyl derivative + CMP + H(+). It catalyses the reaction a beta-D-galactosyl-(1-&gt;4)-N-acetyl-beta-D-glucosaminyl derivative + CMP-N-acetyl-beta-neuraminate = an N-acetyl-alpha-neuraminyl-(2-&gt;3)-beta-D-galactosyl-(1-&gt;4)-N-acetyl-beta-D-glucosaminyl derivative + CMP + H(+). The catalysed reaction is a ganglioside GM1 (d18:1(4E)) + CMP-N-acetyl-beta-neuraminate = a ganglioside GD1a (d18:1(4E)) + CMP + H(+). The enzyme catalyses a ganglioside GA1 (d18:1(4E)) + CMP-N-acetyl-beta-neuraminate = a ganglioside GM1b (d18:1(4E)) + CMP + H(+). It carries out the reaction a ganglioside GT1c (d18:1(4E)) + CMP-N-acetyl-beta-neuraminate = a ganglioside GQ1c (d18:1(4E)) + CMP + H(+). It catalyses the reaction a neolactoside nLc4Cer + CMP-N-acetyl-beta-neuraminate = a neolactoside IV(3)-alpha-NeuAc-nLc4Cer + CMP + H(+). The catalysed reaction is a neolactoside nLc4Cer(d18:1(4E)) + CMP-N-acetyl-beta-neuraminate = a neolactoside IV(3)-alpha-NeuAc-nLc4Cer(d18:1(4E)) + CMP + H(+). It functions in the pathway protein modification; protein glycosylation. Its pathway is glycolipid biosynthesis. A beta-galactoside alpha2-3 sialyltransferase involved in terminal sialylation of glycoproteins and glycolipids. Catalyzes the transfer of sialic acid (N-acetyl-neuraminic acid; Neu5Ac) from the nucleotide sugar donor CMP-Neu5Ac onto acceptor Galbeta-(1-&gt;3)-GalNAc- and Galbeta-(1-&gt;4)-GlcNAc-terminated glycoconjugates through an alpha2-3 linkage. Plays a major role in hemostasis. Responsible for sialylation of plasma VWF/von Willebrand factor, preventing its recognition by asialoglycoprotein receptors (ASGPR) and subsequent clearance. Regulates ASGPR-mediated clearance of platelets. Participates in the biosynthesis of the sialyl Lewis X epitopes, both on O- and N-glycans, which are recognized by SELE/E-selectin, SELP/P-selectin and SELL/L-selectin. Essential for selectin-mediated rolling and adhesion of leukocytes during extravasation. Contributes to adhesion and transendothelial migration of neutrophils likely through terminal sialylation of CXCR2. In glycosphingolipid biosynthesis, sialylates GM1 and GA1 gangliosides to form GD1a and GM1b, respectively. Metabolizes brain c-series ganglioside GT1c forming GQ1c. Synthesizes ganglioside LM1 (IV3Neu5Ac-nLc4Cer), a major structural component of peripheral nerve myelin. This Pan troglodytes (Chimpanzee) protein is CMP-N-acetylneuraminate-beta-galactosamide-alpha-2,3-sialyltransferase 4 (ST3GAL4).